Reading from the N-terminus, the 388-residue chain is 3-oxo-Delta(4,5)-steroid 5-beta-reductase (388 aa).

Residue serine 2 is modified to N-acetylserine. NADP(+) contacts are provided by residues 35–37 (TGI), 63–64 (RR), 81–82 (DV), threonine 105, and glutamine 143. Active-site residues include lysine 147 and tyrosine 178. Residues tyrosine 178, isoleucine 205, and 212 to 214 (SLM) contribute to the NADP(+) site.

This sequence belongs to the short-chain dehydrogenases/reductases (SDR) family. Highly divergent. As to quaternary structure, homodimer. As to expression, expressed in roots, stems, leaves, flowers, seeds and siliques. Expressed in the vascular bundles.

The catalysed reaction is 5beta-cholestan-3-one + NADP(+) = cholest-4-en-3-one + NADPH + H(+). The enzyme catalyses 4,5beta-dihydrocortisone + NADP(+) = cortisone + NADPH + H(+). Involved in vascular strand development. Catalyzes the stereospecific conversion of progesterone to 5-beta-pregnane-3,20-dione. Can use progesterone, testosterone, 21-acetyl cortexone, 2-cyclohexenone, but-1-en-3-one, ethyl acrylate, ethylmethacrylate, cortisone and canarigenone as substrates, lower activity with 3-methyl-2-cyclohexenone and 3,5,5-trimethyl-2-cyclohexenone as substrate, and no activity with canarigenin, canarigenin digitoxoside and pregnenolone. May be involved in the formation of 5-beta phytoecdysteroids. The protein is 3-oxo-Delta(4,5)-steroid 5-beta-reductase (VEP1) of Arabidopsis thaliana (Mouse-ear cress).